A 301-amino-acid polypeptide reads, in one-letter code: ATP synthase gamma chain (301 aa).

This sequence belongs to the ATPase gamma chain family. In terms of assembly, F-type ATPases have 2 components, CF(1) - the catalytic core - and CF(0) - the membrane proton channel. CF(1) has five subunits: alpha(3), beta(3), gamma(1), delta(1), epsilon(1). CF(0) has three main subunits: a, b and c.

The protein localises to the cell inner membrane. In terms of biological role, produces ATP from ADP in the presence of a proton gradient across the membrane. The gamma chain is believed to be important in regulating ATPase activity and the flow of protons through the CF(0) complex. The chain is ATP synthase gamma chain from Bordetella avium (strain 197N).